Consider the following 56-residue polypeptide: MDRRLLEILACPICKGKLVYSQDEQELICRFDKLVYPIHDGIPVMLPDSTRPLIER.

This sequence belongs to the UPF0434 family.

The protein is UPF0434 protein CbuG_1535 of Coxiella burnetii (strain CbuG_Q212) (Coxiella burnetii (strain Q212)).